The chain runs to 256 residues: Ribosomal RNA small subunit methyltransferase A (256 aa).

S-adenosyl-L-methionine-binding residues include His12, Leu14, Gly39, Glu60, Asp83, and Asn101.

This sequence belongs to the class I-like SAM-binding methyltransferase superfamily. rRNA adenine N(6)-methyltransferase family. RsmA subfamily.

It localises to the cytoplasm. It catalyses the reaction adenosine(1518)/adenosine(1519) in 16S rRNA + 4 S-adenosyl-L-methionine = N(6)-dimethyladenosine(1518)/N(6)-dimethyladenosine(1519) in 16S rRNA + 4 S-adenosyl-L-homocysteine + 4 H(+). In terms of biological role, specifically dimethylates two adjacent adenosines (A1518 and A1519) in the loop of a conserved hairpin near the 3'-end of 16S rRNA in the 30S particle. May play a critical role in biogenesis of 30S subunits. The protein is Ribosomal RNA small subunit methyltransferase A of Nitrosomonas eutropha (strain DSM 101675 / C91 / Nm57).